The chain runs to 1382 residues: Hepatocyte growth factor receptor (1382 aa).

The first 24 residues, 1–24, serve as a signal peptide directing secretion; it reads MRAPAVLAPGILVLLFTLVQRSCG. Topologically, residues 25–933 are extracellular; the sequence is ECKEALVKSE…VIVQPDQNFT (909 aa). A Sema domain is found at 27–516; sequence KEALVKSEMN…TGKKITKIPL (490 aa). An N-linked (GlcNAc...) asparagine glycan is attached at N45. 4 disulfide bridges follow: C95/C101, C98/C160, C133/C141, and C173/C176. N-linked (GlcNAc...) asparagine glycosylation is present at N106. N-linked (GlcNAc...) asparagine glycosylation is found at N203 and N359. Disulfide bonds link C299/C364 and C386/C398. N400 and N406 each carry an N-linked (GlcNAc...) asparagine glycan. 4 cysteine pairs are disulfide-bonded: C521/C539, C527/C562, C530/C546, and C542/C552. 3 IPT/TIG domains span residues 564–656, 658–740, and 743–837; these read PTIY…FSYV, PIIT…FSYQ, and PIVY…LIYV. T583 is a glycosylation site (O-linked (Man) threonine). Residues N608 and N636 are each glycosylated (N-linked (GlcNAc...) asparagine). T677 and T762 each carry an O-linked (Man) threonine glycan. N786, N880, and N931 each carry an N-linked (GlcNAc...) asparagine glycan. Residues 934 to 956 traverse the membrane as a helical segment; the sequence is GLIVGVISISLIVLLLLGLFLWL. At 957–1382 the chain is on the cytoplasmic side; it reads KRRKQIKDLG…QDIIDGEGDT (426 aa). At S967 the chain carries Phosphoserine. T978 carries the phosphothreonine modification. S991, S998, and S1001 each carry phosphoserine. Phosphotyrosine is present on Y1004. The Protein kinase domain maps to 1079–1346; the sequence is VHFNEVIGRG…RISAIFSTFI (268 aa). ATP is bound by residues 1085–1093 and K1111; that span reads IGRGHFGCV. Catalysis depends on D1205, which acts as the Proton acceptor. The tract at residues 1213–1382 is interaction with RANBP9; that stretch reads LDEKFTVKVA…QDIIDGEGDT (170 aa). Phosphotyrosine is present on Y1231. Phosphotyrosine; by autocatalysis is present on residues Y1235 and Y1236. T1290 is modified (phosphothreonine). The segment at 1321–1360 is interaction with MUC20; the sequence is WHPKAELRPSFSELVSRISAIFSTFIGEHYVHVNATYVNV. 2 positions are modified to phosphotyrosine; by autocatalysis: Y1350 and Y1357. Position 1366 is a phosphotyrosine (Y1366).

Belongs to the protein kinase superfamily. Tyr protein kinase family. Heterodimer made of an alpha chain (50 kDa) and a beta chain (145 kDa) which are disulfide linked. Binds PLXNB1. Interacts when phosphorylated with downstream effectors including STAT3, PIK3R1, SRC, PCLG1, GRB2 and GAB1. Interacts with SPSB1, SPSB2 and SPSB4. Interacts with INPP5D/SHIP1. When phosphorylated at Tyr-1357, interacts with INPPL1/SHIP2. Interacts with RANBP9 and RANBP10, as well as SPSB1, SPSB2, SPSB3 and SPSB4. SPSB1 binding occurs in the presence and in the absence of HGF, however HGF treatment has a positive effect on this interaction. Interacts with MUC20; prevents interaction with GRB2 and suppresses hepatocyte growth factor-induced cell proliferation. Interacts with GRB10. Interacts with PTPN1 and PTPN2. Interacts with HSP90AA1 and HSP90AB1; the interaction suppresses MET kinase activity. Interacts with tensin TNS3. Interacts (when phosphorylated) with tensin TNS4 (via SH2 domain); the interaction increases MET protein stability by inhibiting MET endocytosis and subsequent lysosomal degradation. Post-translationally, autophosphorylated in response to ligand binding on Tyr-1235 and Tyr-1236 in the kinase domain leading to further phosphorylation of Tyr-1350 and Tyr-1357 in the C-terminal multifunctional docking site. Dephosphorylated by PTPRJ at Tyr-1350 and Tyr-1366. Dephosphorylated by PTPN1 and PTPN2. In terms of processing, ubiquitinated. Ubiquitination by CBL regulates the receptor stability and activity through proteasomal degradation. O-mannosylation of IPT/TIG domains by TMEM260 is required for protein maturation. O-mannosylated residues are composed of single mannose glycans that are not elongated or modified.

The protein localises to the membrane. The catalysed reaction is L-tyrosyl-[protein] + ATP = O-phospho-L-tyrosyl-[protein] + ADP + H(+). With respect to regulation, in its inactive state, the C-terminal tail interacts with the catalytic domain and inhibits the kinase activity. Upon ligand binding, the C-terminal tail is displaced and becomes phosphorylated, thus increasing the kinase activity. In terms of biological role, receptor tyrosine kinase that transduces signals from the extracellular matrix into the cytoplasm by binding to hepatocyte growth factor/HGF ligand. Regulates many physiological processes including proliferation, scattering, morphogenesis and survival. Ligand binding at the cell surface induces autophosphorylation of MET on its intracellular domain that provides docking sites for downstream signaling molecules. Following activation by ligand, interacts with the PI3-kinase subunit PIK3R1, PLCG1, SRC, GRB2, STAT3 or the adapter GAB1. Recruitment of these downstream effectors by MET leads to the activation of several signaling cascades including the RAS-ERK, PI3 kinase-AKT, or PLCgamma-PKC. The RAS-ERK activation is associated with the morphogenetic effects while PI3K/AKT coordinates prosurvival effects. During embryonic development, MET signaling plays a role in gastrulation, development and migration of muscles and neuronal precursors, angiogenesis and kidney formation. In adults, participates in wound healing as well as organ regeneration and tissue remodeling. Also promotes differentiation and proliferation of hematopoietic cells. This chain is Hepatocyte growth factor receptor (MET), found in Mustela putorius furo (European domestic ferret).